We begin with the raw amino-acid sequence, 253 residues long: Zwei Ig domain protein zig-4 (253 aa).

The signal sequence occupies residues 1–16; that stretch reads MFAIALLSFLVVLINA. Ig-like C2-type domains are found at residues 43–146 and 162–245; these read PAKI…AEVE and PEIV…TFLY. Disulfide bonds link cysteine 67/cysteine 130 and cysteine 183/cysteine 229.

As to expression, expressed in PVT, ASK, BAG, M2 and ASI neurons. In L1 larvae, expressed in pharyngeal ectoderm and mesoderm.

It localises to the secreted. In terms of biological role, required for maintaining axon position of PVQ and PVP neurons postembryonically in the ventral nerve cord (VNC) by preventing axons drifting into the opposite side of the VNC that could occur during body growth and movement. In Caenorhabditis elegans, this protein is Zwei Ig domain protein zig-4.